The chain runs to 146 residues: Ecotin-like protein 1 (146 aa).

The protein belongs to the protease inhibitor I11 (ecotin) family.

This chain is Ecotin-like protein 1 (ISP1), found in Leishmania infantum.